A 261-amino-acid chain; its full sequence is Cytochrome c oxidase subunit 3 (261 aa).

At 1–15 (MTHQTHAYHMVNPSP) the chain is on the mitochondrial matrix side. Residues 16 to 34 (WPLTGALSALLMTSGLIMW) traverse the membrane as a helical segment. Over 35 to 40 (FHFNST) the chain is Mitochondrial intermembrane. The helical transmembrane segment at 41 to 66 (TLLTLGLTTNMLTMYQWWRDVIREST) threads the bilayer. Residues 67-72 (FQGHHT) are Mitochondrial matrix-facing. The helical transmembrane segment at 73–105 (PTVQKGLRYGMILFIISEVLFFTGFFWAFYHSS) threads the bilayer. Residues 106-128 (LAPTPELGGCWPPTGIHPLNPLE) lie on the Mitochondrial intermembrane side of the membrane. A helical membrane pass occupies residues 129-152 (VPLLNTSVLLASGVSITWAHHSLM). Residues 153 to 155 (EGN) are Mitochondrial matrix-facing. The chain crosses the membrane as a helical span at residues 156-183 (RNPMLQALFITIALGIYFTLLQASEYYE). Residues 184–190 (APFTISD) lie on the Mitochondrial intermembrane side of the membrane. Residues 191-223 (GVYGSTFFVATGFHGLHVIIGSTFLIVCFFRQL) form a helical membrane-spanning segment. At 224–232 (KFHFTSNHH) the chain is on the mitochondrial matrix side. Residues 233–256 (FGFEAAAWYWHFVDVVWLFLYVSI) form a helical membrane-spanning segment. The Mitochondrial intermembrane segment spans residues 257-261 (YWWGS).

The protein belongs to the cytochrome c oxidase subunit 3 family. In terms of assembly, component of the cytochrome c oxidase (complex IV, CIV), a multisubunit enzyme composed of 14 subunits. The complex is composed of a catalytic core of 3 subunits MT-CO1, MT-CO2 and MT-CO3, encoded in the mitochondrial DNA, and 11 supernumerary subunits COX4I, COX5A, COX5B, COX6A, COX6B, COX6C, COX7A, COX7B, COX7C, COX8 and NDUFA4, which are encoded in the nuclear genome. The complex exists as a monomer or a dimer and forms supercomplexes (SCs) in the inner mitochondrial membrane with NADH-ubiquinone oxidoreductase (complex I, CI) and ubiquinol-cytochrome c oxidoreductase (cytochrome b-c1 complex, complex III, CIII), resulting in different assemblies (supercomplex SCI(1)III(2)IV(1) and megacomplex MCI(2)III(2)IV(2)).

Its subcellular location is the mitochondrion inner membrane. The enzyme catalyses 4 Fe(II)-[cytochrome c] + O2 + 8 H(+)(in) = 4 Fe(III)-[cytochrome c] + 2 H2O + 4 H(+)(out). Functionally, component of the cytochrome c oxidase, the last enzyme in the mitochondrial electron transport chain which drives oxidative phosphorylation. The respiratory chain contains 3 multisubunit complexes succinate dehydrogenase (complex II, CII), ubiquinol-cytochrome c oxidoreductase (cytochrome b-c1 complex, complex III, CIII) and cytochrome c oxidase (complex IV, CIV), that cooperate to transfer electrons derived from NADH and succinate to molecular oxygen, creating an electrochemical gradient over the inner membrane that drives transmembrane transport and the ATP synthase. Cytochrome c oxidase is the component of the respiratory chain that catalyzes the reduction of oxygen to water. Electrons originating from reduced cytochrome c in the intermembrane space (IMS) are transferred via the dinuclear copper A center (CU(A)) of subunit 2 and heme A of subunit 1 to the active site in subunit 1, a binuclear center (BNC) formed by heme A3 and copper B (CU(B)). The BNC reduces molecular oxygen to 2 water molecules using 4 electrons from cytochrome c in the IMS and 4 protons from the mitochondrial matrix. The polypeptide is Cytochrome c oxidase subunit 3 (MT-CO3) (Madoqua guentheri (Guenther's dik-dik)).